The chain runs to 427 residues: MKIQNVNAIEILDSRGNPTVEVNLKLEDGTISRAMVPSGASTGEREATELRDGDKKRYGGKGVLKAVENVNSAIAKAIENKHFTNQRELDYFLIELDETNNKSKLGANAILGVSMAFARAKAQSSRTPLYQYLGGSNAHIMPVPCMNVINGGKHADNTIDFQEFMIAPHNAPSFRESIRMGEEVFHALKAVLKLKGLSTGVGDEGGFAPDLKSNEQAVEMILEGITKAGYKPSVDVSICLDPASSEMWENGKYKFFKSTQKLVSSDEMVKLWESWVNQYPIVLLEDGMAENDWEGWKNLTDVIGNKIEIVGDDLFCTNKSILLNGINKGVANSILIKLNQIGTVTETLETIELAYKNSYNCFVSHRSGETVDSFIADLTVGINAGHLKSGSGCRGERIEKFNQLMRIENELGKSAQFAGLKAFKNAK.

Gln162 is a binding site for (2R)-2-phosphoglycerate. Glu204 (proton donor) is an active-site residue. Mg(2+) contacts are provided by Asp241, Glu285, and Asp312. Residues Lys337, Arg366, Ser367, and Lys388 each contribute to the (2R)-2-phosphoglycerate site. Lys337 (proton acceptor) is an active-site residue.

Belongs to the enolase family. Mg(2+) serves as cofactor.

The protein localises to the cytoplasm. Its subcellular location is the secreted. It localises to the cell surface. It carries out the reaction (2R)-2-phosphoglycerate = phosphoenolpyruvate + H2O. The protein operates within carbohydrate degradation; glycolysis; pyruvate from D-glyceraldehyde 3-phosphate: step 4/5. In terms of biological role, catalyzes the reversible conversion of 2-phosphoglycerate (2-PG) into phosphoenolpyruvate (PEP). It is essential for the degradation of carbohydrates via glycolysis. This chain is Enolase 1, found in Chlorobaculum tepidum (strain ATCC 49652 / DSM 12025 / NBRC 103806 / TLS) (Chlorobium tepidum).